Reading from the N-terminus, the 455-residue chain is Ribulose bisphosphate carboxylase large chain (455 aa).

Lysine 5 carries the N6,N6,N6-trimethyllysine modification. Substrate contacts are provided by asparagine 114 and threonine 164. The Proton acceptor role is filled by lysine 166. Lysine 168 serves as a coordination point for substrate. 3 residues coordinate Mg(2+): lysine 192, aspartate 194, and glutamate 195. Lysine 192 carries the N6-carboxylysine modification. The active-site Proton acceptor is histidine 285. Substrate contacts are provided by arginine 286, histidine 318, and serine 370.

This sequence belongs to the RuBisCO large chain family. Type I subfamily. As to quaternary structure, heterohexadecamer of 8 large chains and 8 small chains; disulfide-linked. The disulfide link is formed within the large subunit homodimers. Mg(2+) serves as cofactor. The disulfide bond which can form in the large chain dimeric partners within the hexadecamer appears to be associated with oxidative stress and protein turnover.

The protein resides in the plastid. It is found in the chloroplast. The catalysed reaction is 2 (2R)-3-phosphoglycerate + 2 H(+) = D-ribulose 1,5-bisphosphate + CO2 + H2O. It catalyses the reaction D-ribulose 1,5-bisphosphate + O2 = 2-phosphoglycolate + (2R)-3-phosphoglycerate + 2 H(+). Functionally, ruBisCO catalyzes two reactions: the carboxylation of D-ribulose 1,5-bisphosphate, the primary event in carbon dioxide fixation, as well as the oxidative fragmentation of the pentose substrate in the photorespiration process. Both reactions occur simultaneously and in competition at the same active site. This is Ribulose bisphosphate carboxylase large chain from Lupinus microcarpus (Chick lupine).